A 498-amino-acid chain; its full sequence is NAD(P)H-quinone oxidoreductase chain 4, chloroplastic (498 aa).

14 consecutive transmembrane segments (helical) span residues 4–24 (LPWLTLIVLFPFSASFLIPLL), 37–57 (LGICALEFLLITFTFCCQFHL), 87–107 (MGLILLTGFITTLAILAAWPV), 111–131 (VRLFYFLMLAMYSGQIGLFAS), 134–154 (ILLFFFMWELELIPVYLLLSM), 167–187 (FLLYTAGGSIFLLVGSLTMGL), 207–227 (IAVETALYFSFLIAYAVKLPI), 242–262 (HYSTCMLLAGILLKMGGYGLI), 274–294 (FLFSPLLVTMGAVQIAYASLI), 305–325 (IAYSSVSHMGFVIIGISSITD), 331–351 (AILQMISHGLIGAALFFLAGI), 386–406 (LALPGMSSFVAEFLIFLGIVT), 417–437 (IILFIGAIGVILTPIYLLSML), and 461–481 (IFISVFILLPILGIGIYPNLV).

The protein belongs to the complex I subunit 4 family.

The protein resides in the plastid. It is found in the chloroplast thylakoid membrane. It catalyses the reaction a plastoquinone + NADH + (n+1) H(+)(in) = a plastoquinol + NAD(+) + n H(+)(out). The catalysed reaction is a plastoquinone + NADPH + (n+1) H(+)(in) = a plastoquinol + NADP(+) + n H(+)(out). The protein is NAD(P)H-quinone oxidoreductase chain 4, chloroplastic of Psilotum nudum (Whisk fern).